A 138-amino-acid chain; its full sequence is Cyclin-dependent kinase 4 inhibitor B (138 aa).

Residues 13-39 form an ANK 1; truncated repeat; it reads GSDEGLASAAARGLVEKVRQLLEAGAD. 3 ANK repeats span residues 46–74, 79–108, and 112–138; these read FGRRAIQVMMMGSARVAELLLLHGAEPNC, TLTRPVHDAAREGFLDTLVVLHRAGARLDV, and WGRLPVDLAEERGHRDVAGYLRTATGD.

The protein belongs to the CDKN2 cyclin-dependent kinase inhibitor family. In terms of assembly, heterodimer of CDKN2B with CDK4 or CDK6. Isoform 2 does not interact with CDK4 nor CDK6. As to expression, isoform 2 is expressed in normal (keratinocytes, fibroblasts) and tumor cell lines.

It is found in the cytoplasm. Interacts strongly with CDK4 and CDK6. Potent inhibitor. Potential effector of TGF-beta induced cell cycle arrest. The protein is Cyclin-dependent kinase 4 inhibitor B (CDKN2B) of Homo sapiens (Human).